A 131-amino-acid polypeptide reads, in one-letter code: MSGGKGGKAGSAAKASQTRSAKAGLTFPVGRVHRLLRRGNYAQRIGSGAPVYLTAVLEYLAAEILELAGNAARDNKKSRIIPRHLQLAIRNDDELNKLLGNVTIAQGGVLPNIHQNLLPKKSAKPSASQEL.

Residue serine 2 is modified to N-acetylserine. N6-acetyllysine is present on residues lysine 5 and lysine 8. Glutamine 106 is modified (N5-methylglutamine). Serine 128 carries the post-translational modification Phosphoserine. The [ST]-Q motif motif lies at serine 128 to glutamine 129.

Belongs to the histone H2A family. The nucleosome is a histone octamer containing two molecules each of H2A, H2B, H3 and H4 assembled in one H3-H4 heterotetramer and two H2A-H2B heterodimers. The octamer wraps approximately 147 bp of DNA. Post-translationally, phosphorylated to form H2AS128ph (gamma-H2A) in response to DNA double-strand breaks (DSBs) generated by exogenous genotoxic agents and by stalled replication forks. Phosphorylation is dependent on the DNA damage checkpoint kinases MEC1/ATR and TEL1/ATM, spreads on either side of a detected DSB site and may mark the surrounding chromatin for recruitment of proteins required for DNA damage signaling and repair. Gamma-H2A is removed from the DNA prior to the strand invasion-primer extension step of the repair process and subsequently dephosphorylated by PPH3, a component of the histone H2A phosphatase complex (HTP-C). Dephosphorylation is necessary for efficient recovery from the DNA damage checkpoint. Acetylated by ESA1 to form H2AK4ac and H2AK7ac.

Its subcellular location is the nucleus. The protein localises to the chromosome. Functionally, core component of nucleosome which plays a central role in DNA double strand break (DSB) repair. Nucleosomes wrap and compact DNA into chromatin, limiting DNA accessibility to the cellular machineries which require DNA as a template. Histones thereby play a central role in transcription regulation, DNA repair, DNA replication and chromosomal stability. DNA accessibility is regulated via a complex set of post-translational modifications of histones, also called histone code, and nucleosome remodeling. The protein is Histone H2A.1 (HTA1) of Candida glabrata (strain ATCC 2001 / BCRC 20586 / JCM 3761 / NBRC 0622 / NRRL Y-65 / CBS 138) (Yeast).